Consider the following 661-residue polypeptide: Ecdysteroid-phosphate phosphatase (661 aa).

Residues 16–57 (KQDVSPLQILLQMGFRRQRALKALAATGNRSVQLASDWLLTH) enclose the UBA domain. One can recognise an SH3 domain in the interval 235 to 300 (ANHQVYKVTQ…PAVYTRRTAE (66 aa)). R409 is an active-site residue. Catalysis depends on H410, which acts as the Tele-phosphohistidine intermediate. The active site involves H590.

Homodimer. In terms of tissue distribution, detected in non-diapause eggs, with highest expression between 2 and 5 days after oviposition. Not detected in other tissues tested.

It is found in the cytoplasm. The protein localises to the cytosol. The enzyme catalyses ecdysone 22-phosphate + H2O = ecdysone + phosphate. It catalyses the reaction 20-hydroxyecdysone 22-phosphate + H2O = 20-hydroxyecdysone + phosphate. The catalysed reaction is 2-deoxyecdysone 22-phosphate + H2O = 2-deoxyecdysone + phosphate. It carries out the reaction O-phospho-L-tyrosyl-[protein] + H2O = L-tyrosyl-[protein] + phosphate. With respect to regulation, competitively inhibited by 4-nitrophenyl phosphate (para-nitrophenylphosphate, pNPP). Also inhibited by tungstate, vanadate, and phosphate. Steroid phosphatase which catalyzes the conversion of inactive phosphorylated ecdysteroids into their active forms. Shows high activity towards ecdysone 22-phosphate (E22P). Has lower activity towards other ecdysteriod phosphates including 20-hydroxyecdysone 22-phosphate (20E22P) and 2-deoxyecdysone 22-phosphate (2dE22P). Also has protein tyrosine phosphatase activity. The chain is Ecdysteroid-phosphate phosphatase from Bombyx mori (Silk moth).